Reading from the N-terminus, the 556-residue chain is CDP-diacylglycerol--glycerol-3-phosphate 3-phosphatidyltransferase, mitochondrial (556 aa).

Residues 1 to 28 (MAVAAAAAAGPVFWRRLLGLLPGRPGLA) constitute a mitochondrion transit peptide. S49 carries the phosphoserine modification. 124-131 (ASLYLGTG) contributes to the ATP binding site. PLD phosphodiesterase domains are found at residues 215–241 (TIGL…SDSY) and 460–493 (RGWT…GYRS). Catalysis depends on residues H220, K222, and D227.

The protein belongs to the CDP-alcohol phosphatidyltransferase class-II family.

The protein resides in the mitochondrion. It carries out the reaction a CDP-1,2-diacyl-sn-glycerol + sn-glycerol 3-phosphate = a 1,2-diacyl-sn-glycero-3-phospho-(1'-sn-glycero-3'-phosphate) + CMP + H(+). Its pathway is phospholipid metabolism; phosphatidylglycerol biosynthesis; phosphatidylglycerol from CDP-diacylglycerol: step 1/2. Its activity is regulated as follows. Activated by calcium and magnesium and inhibited by other bivalent cations. Its function is as follows. Functions in the biosynthesis of the anionic phospholipids phosphatidylglycerol and cardiolipin. This is CDP-diacylglycerol--glycerol-3-phosphate 3-phosphatidyltransferase, mitochondrial (PGS1) from Homo sapiens (Human).